A 79-amino-acid polypeptide reads, in one-letter code: Cytochrome b (79 aa).

3 helical membrane passes run 1–7 (TALLLAM), 31–52 (WLIRNLHANGASMFFICIYLHI), and 67–79 (WNIGVILLLTLMA). Residues His37 and His51 each coordinate heme b.

Belongs to the cytochrome b family. The cytochrome bc1 complex contains 11 subunits: 3 respiratory subunits (MT-CYB, CYC1 and UQCRFS1), 2 core proteins (UQCRC1 and UQCRC2) and 6 low-molecular weight proteins (UQCRH/QCR6, UQCRB/QCR7, UQCRQ/QCR8, UQCR10/QCR9, UQCR11/QCR10 and a cleavage product of UQCRFS1). This cytochrome bc1 complex then forms a dimer. Heme b is required as a cofactor.

It localises to the mitochondrion inner membrane. Component of the ubiquinol-cytochrome c reductase complex (complex III or cytochrome b-c1 complex) that is part of the mitochondrial respiratory chain. The b-c1 complex mediates electron transfer from ubiquinol to cytochrome c. Contributes to the generation of a proton gradient across the mitochondrial membrane that is then used for ATP synthesis. The chain is Cytochrome b (MT-CYB) from Corcorax melanoramphos (White-winged chough).